Consider the following 390-residue polypeptide: Probable L-tyrosine/L-aspartate decarboxylase (390 aa).

Lys239 is modified (N6-(pyridoxal phosphate)lysine).

It belongs to the group II decarboxylase family. MfnA subfamily. Pyridoxal 5'-phosphate is required as a cofactor.

It catalyses the reaction L-tyrosine + H(+) = tyramine + CO2. The catalysed reaction is L-aspartate + H(+) = beta-alanine + CO2. It participates in cofactor biosynthesis; methanofuran biosynthesis. It functions in the pathway cofactor biosynthesis; coenzyme A biosynthesis. Catalyzes the decarboxylation of L-tyrosine to produce tyramine for methanofuran biosynthesis. Can also catalyze the decarboxylation of L-aspartate to produce beta-alanine for coenzyme A (CoA) biosynthesis. This Methanococcus aeolicus (strain ATCC BAA-1280 / DSM 17508 / OCM 812 / Nankai-3) protein is Probable L-tyrosine/L-aspartate decarboxylase.